We begin with the raw amino-acid sequence, 246 residues long: MNSLLFLALVGAAVAFPVDDDDKIVGGYTCRENSIPYQVSLNSGYHFCGGSLINDQWVVSAAHCYKTRIQVRLGEHNINVLEGNEQFVNSAKIIKHPNFNSRTLNNDIMLIKLASPVTLNARVATVALPSSCAPAGTQCLISGWGNTLSFGVNNPDLLQCLDAPLLPQADCEASYPGKITNNMICVGFLEGGKDSCQGDSGGPVVCNGQLQGIVSWGYGCALKDNPGVYTKVCNYVDWIQDTIAAN.

An N-terminal signal peptide occupies residues 1–15; that stretch reads MNSLLFLALVGAAVA. A propeptide spans 16–23 (activation peptide); sequence FPVDDDDK. Residues 24-244 enclose the Peptidase S1 domain; sequence IVGGYTCREN…YVDWIQDTIA (221 aa). Cysteine 48 and cysteine 64 form a disulfide bridge. Active-site charge relay system residues include histidine 63 and aspartate 107. 3 disulfide bridges follow: cysteine 139-cysteine 206, cysteine 171-cysteine 185, and cysteine 196-cysteine 220. Catalysis depends on serine 200, which acts as the Charge relay system.

It belongs to the peptidase S1 family. Post-translationally, proteolytically cleaved and activated by an autocatalytic mechanism. Cleavage by CTRC inhibits autoactivation. In terms of tissue distribution, expressed in the heart, lung, brain, kidney, liver, epididymis, ovary and uterus. Expression in the testis is limited to round and elongating spermatids.

The protein localises to the cytoplasmic vesicle. It localises to the secretory vesicle. The protein resides in the acrosome. The enzyme catalyses Preferential cleavage: Arg-|-Xaa, Lys-|-Xaa.. Its activity is regulated as follows. Activated by autocatalytic cleavage. Cleavage by CTRC inhibits autoactivation. Functionally, serine protease capable of autoactivation. The chain is Trypsin-5 from Mus musculus (Mouse).